Consider the following 274-residue polypeptide: Diaminopimelate epimerase (274 aa).

Substrate-binding residues include asparagine 11, glutamine 44, and asparagine 64. The active-site Proton donor is the cysteine 73. Residues 74–75 (GN), asparagine 157, asparagine 190, and 208–209 (ER) contribute to the substrate site. Catalysis depends on cysteine 217, which acts as the Proton acceptor. Substrate is bound at residue 218–219 (GS).

The protein belongs to the diaminopimelate epimerase family. Homodimer.

It is found in the cytoplasm. The catalysed reaction is (2S,6S)-2,6-diaminopimelate = meso-2,6-diaminopimelate. It functions in the pathway amino-acid biosynthesis; L-lysine biosynthesis via DAP pathway; DL-2,6-diaminopimelate from LL-2,6-diaminopimelate: step 1/1. Catalyzes the stereoinversion of LL-2,6-diaminopimelate (L,L-DAP) to meso-diaminopimelate (meso-DAP), a precursor of L-lysine and an essential component of the bacterial peptidoglycan. The polypeptide is Diaminopimelate epimerase (Haemophilus influenzae (strain PittGG)).